The following is a 631-amino-acid chain: Phosphomethylpyrimidine synthase (631 aa).

Residues Asn239, Met268, Tyr297, His333, 353–355 (SRG), 394–397 (DGLR), and Glu433 contribute to the substrate site. His437 is a binding site for Zn(2+). Substrate is bound at residue Tyr460. Residue His501 coordinates Zn(2+). Positions 581, 584, and 589 each coordinate [4Fe-4S] cluster.

The protein belongs to the ThiC family. In terms of assembly, homodimer. [4Fe-4S] cluster is required as a cofactor.

It catalyses the reaction 5-amino-1-(5-phospho-beta-D-ribosyl)imidazole + S-adenosyl-L-methionine = 4-amino-2-methyl-5-(phosphooxymethyl)pyrimidine + CO + 5'-deoxyadenosine + formate + L-methionine + 3 H(+). The protein operates within cofactor biosynthesis; thiamine diphosphate biosynthesis. Its function is as follows. Catalyzes the synthesis of the hydroxymethylpyrimidine phosphate (HMP-P) moiety of thiamine from aminoimidazole ribotide (AIR) in a radical S-adenosyl-L-methionine (SAM)-dependent reaction. In Salmonella gallinarum (strain 287/91 / NCTC 13346), this protein is Phosphomethylpyrimidine synthase.